The sequence spans 459 residues: Probable rhamnogalacturonase C (459 aa).

A signal peptide spans 1-18; sequence MRASILPLTLFLATLAGA. Residues Asn36, Asn64, Asn77, Asn140, and Asn155 are each glycosylated (N-linked (GlcNAc...) asparagine). Residues Cys39 and Cys65 are joined by a disulfide bond. The active-site Proton donor is Asp216. Residues Cys218 and Cys235 are joined by a disulfide bond. N-linked (GlcNAc...) asparagine glycans are attached at residues Asn236 and Asn251. His290 is an active-site residue. N-linked (GlcNAc...) asparagine glycosylation occurs at Asn315. Cys337 and Cys343 are disulfide-bonded. Asn356 is a glycosylation site (N-linked (GlcNAc...) asparagine). An intrachain disulfide couples Cys365 to Cys374.

This sequence belongs to the glycosyl hydrolase 28 family.

Its subcellular location is the secreted. In terms of biological role, pectinolytic enzymes consist of four classes of enzymes: pectine lyase, polygalacturonase, pectin methylesterase and rhamnogalacturonase. Hydrolyzes alpha-D-galacturonopyranosyl-(1,2)-alpha-L-rhamnopyranosyl linkages in the backbone of the hairy regions of pectins. This is Probable rhamnogalacturonase C (rhgC) from Aspergillus niger (strain ATCC MYA-4892 / CBS 513.88 / FGSC A1513).